Here is a 529-residue protein sequence, read N- to C-terminus: Peptide chain release factor 3 (529 aa).

The tr-type G domain occupies 11–280 (ATRRTFAIIS…GLVQWAPPPQ (270 aa)). GTP-binding positions include 20–27 (SHPDAGKT), 88–92 (DTPGH), and 142–145 (NKLD).

It belongs to the TRAFAC class translation factor GTPase superfamily. Classic translation factor GTPase family. PrfC subfamily.

The protein localises to the cytoplasm. Functionally, increases the formation of ribosomal termination complexes and stimulates activities of RF-1 and RF-2. It binds guanine nucleotides and has strong preference for UGA stop codons. It may interact directly with the ribosome. The stimulation of RF-1 and RF-2 is significantly reduced by GTP and GDP, but not by GMP. This Alcanivorax borkumensis (strain ATCC 700651 / DSM 11573 / NCIMB 13689 / SK2) protein is Peptide chain release factor 3.